The following is a 159-amino-acid chain: Lipoprotein LpqH (159 aa).

A signal peptide spans 1–21 (MKRGLTVAVAGAAILVAGLSG). A lipid anchor (N-palmitoyl cysteine) is attached at cysteine 22. Cysteine 22 carries S-diacylglycerol cysteine lipidation. A disordered region spans residues 24–51 (SNKSTTGSGETTTAAGTTASPGAASGPK). The segment covering 27 to 49 (STTGSGETTTAAGTTASPGAASG) has biased composition (low complexity).

Belongs to the mycobacterial 19 kDa antigen family. In terms of processing, modified by Lgt on Cys-22 with an S-linked diacylglycerol with a mixture of C16, C18 and C19 fatty acids, signal peptide is removed by LspA, modifed by Lnt with an amide-linked mixture of C16 and C19 fatty acids.

It localises to the cell membrane. Functionally, might be involved in ligand transport. A host TLR2 agonist, modifies host gene expression in response to pathogen. This is Lipoprotein LpqH (lpqH) from Mycobacterium tuberculosis (strain CDC 1551 / Oshkosh).